Reading from the N-terminus, the 465-residue chain is 3-isopropylmalate dehydratase large subunit (465 aa).

Residues Cys-346, Cys-406, and Cys-409 each coordinate [4Fe-4S] cluster.

This sequence belongs to the aconitase/IPM isomerase family. LeuC type 1 subfamily. In terms of assembly, heterodimer of LeuC and LeuD. [4Fe-4S] cluster serves as cofactor.

The catalysed reaction is (2R,3S)-3-isopropylmalate = (2S)-2-isopropylmalate. It functions in the pathway amino-acid biosynthesis; L-leucine biosynthesis; L-leucine from 3-methyl-2-oxobutanoate: step 2/4. Catalyzes the isomerization between 2-isopropylmalate and 3-isopropylmalate, via the formation of 2-isopropylmaleate. The sequence is that of 3-isopropylmalate dehydratase large subunit from Psychromonas ingrahamii (strain DSM 17664 / CCUG 51855 / 37).